Consider the following 86-residue polypeptide: Protein Tat (86 aa).

The interval Met-1–Ala-21 is disordered. The interval Met-1–Arg-24 is interaction with human CREBBP. The transactivation stretch occupies residues Met-1–Gly-48. Residues Cys-22, Cys-25, and Cys-27 each contribute to the Zn(2+) site. The tract at residues Cys-22 to Cys-37 is cysteine-rich. Lys-28 is subject to N6-acetyllysine; by host PCAF. Zn(2+)-binding residues include Cys-30, His-33, Cys-34, and Cys-37. The interval Phe-38 to Gly-48 is core. Residues Tyr-47 to Glu-86 form a disordered region. The span at Gly-48–Pro-58 shows a compositional bias: basic residues. The Nuclear localization signal, RNA-binding (TAR), and protein transduction signature appears at Arg-49 to Arg-57. Residues Arg-49 to Glu-86 are interaction with the host capping enzyme RNGTT. Lys-50 and Lys-51 each carry N6-acetyllysine; by host EP300 and GCN5L2. Asymmetric dimethylarginine; by host PRMT6 occurs at positions 52 and 53. A compositionally biased stretch (polar residues) spans Gln-60 to Pro-77. Residue Lys-71 forms a Glycyl lysine isopeptide (Lys-Gly) (interchain with G-Cter in ubiquitin) linkage. The short motif at Arg-78–Asp-80 is the Cell attachment site element.

It belongs to the lentiviruses Tat family. In terms of assembly, interacts with host CCNT1. Associates with the P-TEFb complex composed at least of Tat, P-TEFb (CDK9 and CCNT1), TAR RNA, RNA Pol II. Recruits the HATs CREBBP, TAF1/TFIID, EP300, PCAF and GCN5L2. Interacts with host KAT5/Tip60; this interaction targets the latter to degradation. Interacts with the host deacetylase SIRT1. Interacts with host capping enzyme RNGTT; this interaction stimulates RNGTT. Binds to host KDR, and to the host integrins ITGAV/ITGB3 and ITGA5/ITGB1. Interacts with host KPNB1/importin beta-1 without previous binding to KPNA1/importin alpha-1. Interacts with EIF2AK2. Interacts with host nucleosome assembly protein NAP1L1; this interaction may be required for the transport of Tat within the nucleus, since the two proteins interact at the nuclear rim. Interacts with host C1QBP/SF2P32; this interaction involves lysine-acetylated Tat. Interacts with the host chemokine receptors CCR2, CCR3 and CXCR4. Interacts with host DPP4/CD26; this interaction may trigger an anti-proliferative effect. Interacts with host LDLR. Interacts with the host extracellular matrix metalloproteinase MMP1. Interacts with host PRMT6; this interaction mediates Tat's methylation. Interacts with, and is ubiquitinated by MDM2/Hdm2. Interacts with host PSMC3 and HTATIP2. Interacts with STAB1; this interaction may overcome SATB1-mediated repression of IL2 and IL2RA (interleukin) in T cells by binding to the same domain than HDAC1. Interacts (when acetylated) with human CDK13, thereby increasing HIV-1 mRNA splicing and promoting the production of the doubly spliced HIV-1 protein Nef. Interacts with host TBP; this interaction modulates the activity of transcriptional pre-initiation complex. Interacts with host RELA. Interacts with host PLSCR1; this interaction negatively regulates Tat transactivation activity by altering its subcellular distribution. Asymmetrical arginine methylation by host PRMT6 seems to diminish the transactivation capacity of Tat and affects the interaction with host CCNT1. Post-translationally, acetylation by EP300, CREBBP, GCN5L2/GCN5 and PCAF regulates the transactivation activity of Tat. EP300-mediated acetylation of Lys-50 promotes dissociation of Tat from the TAR RNA through the competitive binding to PCAF's bromodomain. In addition, the non-acetylated Tat's N-terminus can also interact with PCAF. PCAF-mediated acetylation of Lys-28 enhances Tat's binding to CCNT1. Lys-50 is deacetylated by SIRT1. In terms of processing, polyubiquitination by host MDM2 does not target Tat to degradation, but activates its transactivation function and fosters interaction with CCNT1 and TAR RNA. Phosphorylated by EIF2AK2 on serine and threonine residues adjacent to the basic region important for TAR RNA binding and function. Phosphorylation of Tat by EIF2AK2 is dependent on the prior activation of EIF2AK2 by dsRNA.

Its subcellular location is the host nucleus. The protein localises to the host nucleolus. The protein resides in the host cytoplasm. It localises to the secreted. In terms of biological role, transcriptional activator that increases RNA Pol II processivity, thereby increasing the level of full-length viral transcripts. Recognizes a hairpin structure at the 5'-LTR of the nascent viral mRNAs referred to as the transactivation responsive RNA element (TAR) and recruits the cyclin T1-CDK9 complex (P-TEFb complex) that will in turn hyperphosphorylate the RNA polymerase II to allow efficient elongation. The CDK9 component of P-TEFb and other Tat-activated kinases hyperphosphorylate the C-terminus of RNA Pol II that becomes stabilized and much more processive. Other factors such as HTATSF1/Tat-SF1, SUPT5H/SPT5, and HTATIP2 are also important for Tat's function. Besides its effect on RNA Pol II processivity, Tat induces chromatin remodeling of proviral genes by recruiting the histone acetyltransferases (HATs) CREBBP, EP300 and PCAF to the chromatin. This also contributes to the increase in proviral transcription rate, especially when the provirus integrates in transcriptionally silent region of the host genome. To ensure maximal activation of the LTR, Tat mediates nuclear translocation of NF-kappa-B by interacting with host RELA. Through its interaction with host TBP, Tat may also modulate transcription initiation. Tat can reactivate a latently infected cell by penetrating in it and transactivating its LTR promoter. In the cytoplasm, Tat is thought to act as a translational activator of HIV-1 mRNAs. Functionally, extracellular circulating Tat can be endocytosed by surrounding uninfected cells via the binding to several surface receptors such as CD26, CXCR4, heparan sulfate proteoglycans (HSPG) or LDLR. Neurons are rarely infected, but they internalize Tat via their LDLR. Through its interaction with nuclear HATs, Tat is potentially able to control the acetylation-dependent cellular gene expression. Modulates the expression of many cellular genes involved in cell survival, proliferation or in coding for cytokines or cytokine receptors. Tat plays a role in T-cell and neurons apoptosis. Tat induced neurotoxicity and apoptosis probably contribute to neuroAIDS. Circulating Tat also acts as a chemokine-like and/or growth factor-like molecule that binds to specific receptors on the surface of the cells, affecting many cellular pathways. In the vascular system, Tat binds to ITGAV/ITGB3 and ITGA5/ITGB1 integrins dimers at the surface of endothelial cells and competes with bFGF for heparin-binding sites, leading to an excess of soluble bFGF. The protein is Protein Tat of Human immunodeficiency virus type 1 group M subtype D (isolate Z2/CDC-Z34) (HIV-1).